The primary structure comprises 507 residues: Maturase K (507 aa).

This sequence belongs to the intron maturase 2 family. MatK subfamily.

Its subcellular location is the plastid. It is found in the chloroplast. Functionally, usually encoded in the trnK tRNA gene intron. Probably assists in splicing its own and other chloroplast group II introns. The sequence is that of Maturase K from Persea americana (Avocado).